A 330-amino-acid chain; its full sequence is Polygalacturonase inhibitor 1 (330 aa).

Residues 1–21 (MDKTATLCLLFLFTFLTTCLS) form the signal peptide. Disulfide bonds link cysteine 25–cysteine 55 and cysteine 56–cysteine 63. 10 LRR repeats span residues 69–93 (NHRVTALTIFSGQISGQIPAEVGDL), 94–117 (PYLETLVFRKLSNLTGTIQPTIAK), 118–142 (LKNLRMLRLSWTNLTGPIPDFISQL), 143–166 (KNLEFLELSFNDLSGSIPSSLSTL), 167–189 (PKILALELSRNKLTGSIPESFGS), 191–215 (PGTVPDLRLSHNQLSGPIPKSLGNI), 217–237 (FNRIDLSRNKLQGDASMLFGS), 238–260 (NKTTWSIDLSRNMFQFDISKVDI), 261–285 (PKTLGILDLNHNGITGNIPVQWTEA), and 287–309 (LQFFNVSYNKLCGHIPTGGKLQT). Residues asparagine 106 and asparagine 130 are each glycosylated (N-linked (GlcNAc...) asparagine). The N-linked (GlcNAc...) asparagine glycan is linked to asparagine 238. N-linked (GlcNAc...) asparagine glycosylation occurs at asparagine 291. 2 cysteine pairs are disulfide-bonded: cysteine 298–cysteine 320 and cysteine 322–cysteine 329.

The protein belongs to the polygalacturonase-inhibiting protein family.

It is found in the secreted. The protein localises to the cell wall. It localises to the membrane. Its function is as follows. Inhibitor of fungal polygalacturonase. It is an important factor for plant resistance to phytopathogenic fungi. The polypeptide is Polygalacturonase inhibitor 1 (PGIP1) (Arabidopsis thaliana (Mouse-ear cress)).